The sequence spans 574 residues: Isocitrate dehydrogenase kinase/phosphatase (574 aa).

Residues 311–317 (APGIRGM) and K332 contribute to the ATP site. D367 is an active-site residue.

This sequence belongs to the AceK family.

Its subcellular location is the cytoplasm. The enzyme catalyses L-seryl-[isocitrate dehydrogenase] + ATP = O-phospho-L-seryl-[isocitrate dehydrogenase] + ADP + H(+). Functionally, bifunctional enzyme which can phosphorylate or dephosphorylate isocitrate dehydrogenase (IDH) on a specific serine residue. This is a regulatory mechanism which enables bacteria to bypass the Krebs cycle via the glyoxylate shunt in response to the source of carbon. When bacteria are grown on glucose, IDH is fully active and unphosphorylated, but when grown on acetate or ethanol, the activity of IDH declines drastically concomitant with its phosphorylation. The polypeptide is Isocitrate dehydrogenase kinase/phosphatase (Shigella boydii serotype 4 (strain Sb227)).